We begin with the raw amino-acid sequence, 251 residues long: DNA repair protein RecO (251 aa).

This sequence belongs to the RecO family.

Involved in DNA repair and RecF pathway recombination. In Staphylococcus saprophyticus subsp. saprophyticus (strain ATCC 15305 / DSM 20229 / NCIMB 8711 / NCTC 7292 / S-41), this protein is DNA repair protein RecO.